The sequence spans 173 residues: NAD(P)H-quinone oxidoreductase subunit J (173 aa).

Belongs to the complex I 30 kDa subunit family. As to quaternary structure, NDH-1 can be composed of about 15 different subunits; different subcomplexes with different compositions have been identified which probably have different functions.

The protein resides in the cellular thylakoid membrane. It catalyses the reaction a plastoquinone + NADH + (n+1) H(+)(in) = a plastoquinol + NAD(+) + n H(+)(out). The enzyme catalyses a plastoquinone + NADPH + (n+1) H(+)(in) = a plastoquinol + NADP(+) + n H(+)(out). NDH-1 shuttles electrons from an unknown electron donor, via FMN and iron-sulfur (Fe-S) centers, to quinones in the respiratory and/or the photosynthetic chain. The immediate electron acceptor for the enzyme in this species is believed to be plastoquinone. Couples the redox reaction to proton translocation, and thus conserves the redox energy in a proton gradient. Cyanobacterial NDH-1 also plays a role in inorganic carbon-concentration. The protein is NAD(P)H-quinone oxidoreductase subunit J of Prochlorococcus marinus (strain NATL2A).